The sequence spans 419 residues: Putative competence-damage inducible protein (419 aa).

The protein belongs to the CinA family.

The chain is Putative competence-damage inducible protein from Streptococcus agalactiae serotype Ia (strain ATCC 27591 / A909 / CDC SS700).